The sequence spans 695 residues: Methionine synthase reductase (695 aa).

The region spanning 4–147 (FLLLYATQRG…VVEPWINGLW (144 aa)) is the Flavodoxin-like domain. Residues 10 to 14 (TQRGQ) and 93 to 124 (LLGLGDSEYTYFCNGGKVIDKRLQELGAQRFY) contribute to the FMN site. Residues 166 to 245 (TLTMASHASR…ASLNIPSLPP (80 aa)) form a hinge region. A phosphoserine mark is found at serine 171 and serine 187. An FAD-binding FR-type domain is found at 269-531 (DPVFHVPVSK…PRTTNSFHLP (263 aa)). Position 289 (lysine 289) interacts with NADP(+). Residues 449–452 (RPYS) and 485–488 (GVCT) contribute to the FAD site. NADP(+) is bound by residues 608 to 609 (SR), 622 to 624 (YVQ), and aspartate 657. Tryptophan 695 contacts FAD.

In terms of assembly, forms a multiprotein complex with MMACHC, MMADHC and MTR. It depends on FAD as a cofactor. The cofactor is FMN.

The protein localises to the cytoplasm. It carries out the reaction 2 methylcob(III)alamin-[methionine synthase] + 2 S-adenosyl-L-homocysteine + NADP(+) + H(+) = 2 cob(II)alamin-[methionine synthase] + 2 S-adenosyl-L-methionine + NADPH. The catalysed reaction is 2 cob(II)alamin + A + 2 H2O + 2 H(+) = 2 aquacob(III)alamin + AH2. Its function is as follows. Key enzyme in methionine and folate homeostasis responsible for the reactivation of methionine synthase (MTR/MS) activity by catalyzing the reductive methylation of MTR-bound cob(II)alamin. Cobalamin (vitamin B12) forms a complex with MTR to serve as an intermediary in methyl transfer reactions that cycles between MTR-bound methylcob(III)alamin and MTR bound-cob(I)alamin forms, and occasional oxidative escape of the cob(I)alamin intermediate during the catalytic cycle leads to the inactive cob(II)alamin species. The processing of cobalamin in the cytosol occurs in a multiprotein complex composed of at least MMACHC, MMADHC, MTRR and MTR which may contribute to shuttle safely and efficiently cobalamin towards MTR in order to produce methionine. Also necessary for the utilization of methyl groups from the folate cycle, thereby affecting transgenerational epigenetic inheritance. Also acts as a molecular chaperone for methionine synthase by stabilizing apoMTR and incorporating methylcob(III)alamin into apoMTR to form the holoenzyme. Also serves as an aquacob(III)alamin reductase by reducing aquacob(III)alamin to cob(II)alamin; this reduction leads to stimulation of the conversion of apoMTR and aquacob(III)alamin to MTR holoenzyme. The polypeptide is Methionine synthase reductase (MTRR) (Bos taurus (Bovine)).